The sequence spans 625 residues: TORTIFOLIA1-like protein 4 (625 aa).

The disordered stretch occupies residues methionine 1–aspartate 34. Positions proline 12 to proline 29 are enriched in low complexity. HEAT repeat units follow at residues aspartate 69–aspartate 106, proline 110–arginine 147, proline 149–aspartate 186, glutamate 190–alanine 227, and lysine 230–leucine 268. The disordered stretch occupies residues serine 391–glutamate 466. Basic and acidic residues-rich tracts occupy residues lysine 404–alanine 413, isoleucine 420–lysine 434, and aspartate 455–glutamate 466. Serine 475 carries the phosphoserine modification. The disordered stretch occupies residues glycine 582–threonine 625. Residues methionine 612 to threonine 625 are compositionally biased toward polar residues.

In Arabidopsis thaliana (Mouse-ear cress), this protein is TORTIFOLIA1-like protein 4.